A 591-amino-acid chain; its full sequence is CTP synthase 1 (591 aa).

Residues 300-554 form the Glutamine amidotransferase type-1 domain; the sequence is SIALVGKYTK…LAAAGRLQSY (255 aa). Catalysis depends on for GATase activity residues cysteine 399, histidine 526, and glutamate 528. Phosphoserine is present on residues serine 571 and serine 575.

This sequence belongs to the CTP synthase family.

It carries out the reaction UTP + L-glutamine + ATP + H2O = CTP + L-glutamate + ADP + phosphate + 2 H(+). The protein operates within pyrimidine metabolism; CTP biosynthesis via de novo pathway; CTP from UDP: step 2/2. Functionally, this enzyme is involved in the de novo synthesis of CTP, a precursor of DNA, RNA and phospholipids. Catalyzes the ATP-dependent amination of UTP to CTP with either L-glutamine or ammonia as a source of nitrogen. This is CTP synthase 1 (ctps1) from Danio rerio (Zebrafish).